The primary structure comprises 4912 residues: Probable E3 ubiquitin-protein ligase HERC2 (4912 aa).

The tract at residues 1 to 67 (MFNRQASGGA…GSGSAAPPSH (67 aa)) is disordered. Positions 8 to 17 (GGAGSSGQGA) are enriched in gly residues. The segment covering 18–31 (GSSQTASAAPVSAG) has biased composition (low complexity). Composition is skewed to gly residues over residues 32–41 (VGVGGGGGAS) and 49–59 (SAAGSGSGSGS). RCC1 repeat units follow at residues 634-685 (NHNA…AITC), 686-739 (GGNL…ALTS), 741-789 (GLVF…ALSS), 791-843 (GQLY…ALSS), and 844-897 (SGEV…VWTQ). Disordered stretches follow at residues 1102 to 1129 (RLSP…STSP), 1428 to 1475 (QLLQ…PGRG), and 1659 to 1681 (QEQE…EEET). Over residues 1446 to 1458 (SHSCHSTAGNTPT) the composition is skewed to polar residues. Thr1776 carries the post-translational modification Phosphothreonine. Positions 1917 to 1990 (SGPDLAKLMK…QYDLQLADSA (74 aa)) constitute an MIB/HERC2 domain. Disordered regions lie at residues 1994–2018 (ASPT…SHPS) and 2381–2412 (GSIY…SGSG). The span at 2396-2412 (ESQQPGEQDQQLSSGSG) shows a compositional bias: polar residues. In terms of domain architecture, UBA spans 2511-2557 (ATDAQLIGQIMEMGFTRRTVELALKQLSLQAEIMPTPEQIVQWILEH). The segment at 2572 to 2620 (LASSASSHDPEADSDNECPSSNSTTSSSTSSDTVEGQPMAVSGPAPPVK) is disordered. Low complexity predominate over residues 2591 to 2604 (SSNSTTSSSTSSDT). The 76-residue stretch at 2624-2699 (RKDFQTADLY…VCFVHIELVE (76 aa)) folds into the CPH domain. The DOC domain maps to 2780–2958 (TSATLPSLGD…FLASEYSAGV (179 aa)). RCC1 repeat units follow at residues 2985–3036 (PCTV…IVSQ), 3037–3090 (DGKV…ALTL), 3091–3142 (DGKV…AISS), 3144–3194 (GELY…TLAL), 3197–3248 (DGAV…ALTR), 3250–3300 (GEVW…AVTD), and 3302–3352 (GQVY…AWGL). 2 disordered regions span residues 3352 to 3374 (LPNA…RDPL) and 3953 to 4000 (LPSS…EQPD). The segment covering 3974–3988 (LNSTTSLSSSTVSNV) has biased composition (low complexity). RCC1 repeat units follow at residues 4049–4099 (STIY…AVTP), 4101–4153 (GKLF…ALTT), 4155–4205 (GEVY…AITA), 4207–4259 (GHVL…CITD), 4261–4311 (DNVW…ALTK), 4313–4363 (GAVY…ACSD), and 4365–4415 (GEVY…ALST). In terms of domain architecture, HECT spans 4547-4882 (ALALPHRVWK…IHFCKSIDTD (336 aa)). Cys4850 acts as the Glycyl thioester intermediate in catalysis. A disordered region spans residues 4891–4912 (EPTEATGSEDNSDLESVASHEG).

The protein localises to the cytoplasm. It localises to the cytoskeleton. Its subcellular location is the microtubule organizing center. It is found in the centrosome. The protein resides in the centriole. The catalysed reaction is S-ubiquitinyl-[E2 ubiquitin-conjugating enzyme]-L-cysteine + [acceptor protein]-L-lysine = [E2 ubiquitin-conjugating enzyme]-L-cysteine + N(6)-ubiquitinyl-[acceptor protein]-L-lysine.. It functions in the pathway protein modification; protein ubiquitination. In terms of biological role, probable E3 ubiquitin-protein ligase which accepts ubiquitin from an E2 ubiquitin-conjugating enzyme in the form of a thioester and then directly transfers the ubiquitin to targeted substrates. In Drosophila melanogaster (Fruit fly), this protein is Probable E3 ubiquitin-protein ligase HERC2 (HERC2).